The chain runs to 314 residues: Probable cell division protein WhiA (314 aa).

Positions 274–308 (SLKELGEMISTGPISKSGVNHRLRKLNELADKIRS) form a DNA-binding region, H-T-H motif.

This sequence belongs to the WhiA family.

Involved in cell division and chromosome segregation. This Staphylococcus haemolyticus (strain JCSC1435) protein is Probable cell division protein WhiA.